Here is a 295-residue protein sequence, read N- to C-terminus: Homeobox protein XHOX-7.1 (295 aa).

Disordered stretches follow at residues 75–115 (RKPG…PISL) and 134–175 (KPES…KPRT). The span at 84-97 (SSPTGSPLAGTSHS) shows a compositional bias: polar residues. Low complexity predominate over residues 141–153 (SSWIQSPSFSPSP). The segment covering 164 to 174 (LRKHKTNRKPR) has biased composition (basic residues). Positions 170–229 (NRKPRTPFTTSQLLALERKFRQKQYLSIAERAEFSSSLNLTETQVKIWFQNRRAKAKRLQ) form a DNA-binding region, homeobox.

It belongs to the Msh homeobox family.

Its subcellular location is the nucleus. The polypeptide is Homeobox protein XHOX-7.1 (Xenopus laevis (African clawed frog)).